A 666-amino-acid chain; its full sequence is Kinesin-like protein Nod (666 aa).

The region spanning 8–320 is the Kinesin motor domain; it reads AVRIAVREAP…LRFGTSAKKL (313 aa). 87–94 lines the ATP pocket; that stretch reads GQTGTGKS. The disordered stretch occupies residues 423–450; the sequence is GFHSDSDKDRHLMPPPTGQEPRQASSQN. The stretch at 639-666 forms a coiled coil; it reads ENLFQVKSLPIWSGNKWERFCQINCLDT.

It belongs to the TRAFAC class myosin-kinesin ATPase superfamily. Kinesin family. As to expression, in adult female, found in meiotically active ovaries.

It is found in the cytoplasm. The protein localises to the cytoskeleton. Required for the distributive chromosome segregation of non-exchange chromosomes during meiosis. May be a microtubule motor required to hold distributively 'paired' chromosomes at the metaphase plate until anaphase. The polypeptide is Kinesin-like protein Nod (nod) (Drosophila melanogaster (Fruit fly)).